A 216-amino-acid polypeptide reads, in one-letter code: Peptide methionine sulfoxide reductase MsrA (216 aa).

C54 is an active-site residue.

This sequence belongs to the MsrA Met sulfoxide reductase family.

It carries out the reaction L-methionyl-[protein] + [thioredoxin]-disulfide + H2O = L-methionyl-(S)-S-oxide-[protein] + [thioredoxin]-dithiol. The enzyme catalyses [thioredoxin]-disulfide + L-methionine + H2O = L-methionine (S)-S-oxide + [thioredoxin]-dithiol. In terms of biological role, has an important function as a repair enzyme for proteins that have been inactivated by oxidation. Catalyzes the reversible oxidation-reduction of methionine sulfoxide in proteins to methionine. The protein is Peptide methionine sulfoxide reductase MsrA of Xanthomonas campestris pv. campestris (strain 8004).